The sequence spans 486 residues: uncharacterized protein (486 aa).

This is an uncharacterized protein from Methanocaldococcus jannaschii (strain ATCC 43067 / DSM 2661 / JAL-1 / JCM 10045 / NBRC 100440) (Methanococcus jannaschii).